Here is a 429-residue protein sequence, read N- to C-terminus: MPIRIDSRNADFVPRFKAFLATKREVSADIEAATRAIVDDVAARGDAALIEATCKFDRLSVDAAGLRFTAAEIDAAVAACDAATLDALKLARDRIETFHRRQLPKDDRFIDALGVELGSRWTAIEAVGLYVPGGSAAYPSSVLMNAVPAMVAGVARVVMVVPSPAGRINPLVLAAARLGGVSEIYRVGGAQAVAALAYGTATIAPVAKIVGPGNAYVAAAKRQVFGKVGIDMIAGPSEVLVIADQTGNAGWIAADLLAQAEHDANAQSILITDSEALAADVERAVETQLATLPRAGIARASWNDFGAVILVTDLDEAVVLADSIAAEHLEIMTADPEGLAARIRNAGAIFLGPHTPEAIGDYVGGSNHVLPTARSARFSSGLGVLDFMKRTSILKCGPDQLRALGPAAMTLGKAEGLDAHARSVGVRLN.

3 residues coordinate NAD(+): tyrosine 130, glutamine 191, and asparagine 214. Residues serine 237, glutamine 259, and histidine 262 each contribute to the substrate site. Zn(2+)-binding residues include glutamine 259 and histidine 262. Residues glutamate 327 and histidine 328 each act as proton acceptor in the active site. Substrate contacts are provided by histidine 328, aspartate 361, glutamate 415, and histidine 420. Position 361 (aspartate 361) interacts with Zn(2+). Histidine 420 provides a ligand contact to Zn(2+).

Belongs to the histidinol dehydrogenase family. It depends on Zn(2+) as a cofactor.

The enzyme catalyses L-histidinol + 2 NAD(+) + H2O = L-histidine + 2 NADH + 3 H(+). The protein operates within amino-acid biosynthesis; L-histidine biosynthesis; L-histidine from 5-phospho-alpha-D-ribose 1-diphosphate: step 9/9. Its function is as follows. Catalyzes the sequential NAD-dependent oxidations of L-histidinol to L-histidinaldehyde and then to L-histidine. The protein is Histidinol dehydrogenase of Nitrobacter winogradskyi (strain ATCC 25391 / DSM 10237 / CIP 104748 / NCIMB 11846 / Nb-255).